We begin with the raw amino-acid sequence, 359 residues long: Fc receptor-like A (359 aa).

The N-terminal stretch at 1–27 is a signal peptide; sequence MKLGCVLMAWALYLSLGVLWVAQMLLA. 2 Ig-like C2-type domains span residues 70 to 159 and 170 to 257; these read PFHL…ETAS and PAPI…PQLE. Disulfide bonds link cysteine 99/cysteine 143 and cysteine 192/cysteine 240. Residues 259–313 form a disordered region; the sequence is RVQGASSSAAPPTLNPAPQKSAAPGTAPEEAPGPLPPPPTPSSEDPGFSSPLGMP. The segment covering 279–288 has biased composition (low complexity); that stretch reads SAAPGTAPEE. Positions 289-299 are enriched in pro residues; that stretch reads APGPLPPPPTP.

In terms of assembly, monomer or homodimer; disulfide-linked. In terms of tissue distribution, expressed specifically in primary and secondary lymphoid tissues like lymph node, spleen and tonsil. Specifically expressed in B-cells with a high level in normal germinal center B-cells, centroblasts and in a subset of diffuse large B-cell lymphomas. Highly expressed in bone marrow B-cells and weakly in earlier B lineage cells. Expressed in pre-germinal and germinal center B-cells in secondary lymphoid tissues. Also expressed in melanoma and melanocytes.

It localises to the cytoplasm. May be implicated in B-cell differentiation and lymphomagenesis. The sequence is that of Fc receptor-like A (FCRLA) from Homo sapiens (Human).